The following is a 111-amino-acid chain: Phosphoribosyl-ATP pyrophosphatase (111 aa).

The protein belongs to the PRA-PH family.

The protein resides in the cytoplasm. The catalysed reaction is 1-(5-phospho-beta-D-ribosyl)-ATP + H2O = 1-(5-phospho-beta-D-ribosyl)-5'-AMP + diphosphate + H(+). It participates in amino-acid biosynthesis; L-histidine biosynthesis; L-histidine from 5-phospho-alpha-D-ribose 1-diphosphate: step 2/9. The sequence is that of Phosphoribosyl-ATP pyrophosphatase from Pseudomonas entomophila (strain L48).